Consider the following 210-residue polypeptide: Orotate phosphoribosyltransferase (210 aa).

5-phospho-alpha-D-ribose 1-diphosphate-binding positions include R97, K98, and 125-133; that span reads NDMVSSGKS. Orotate contacts are provided by S129 and R157.

It belongs to the purine/pyrimidine phosphoribosyltransferase family. PyrE subfamily. Homodimer. Mg(2+) is required as a cofactor.

It carries out the reaction orotidine 5'-phosphate + diphosphate = orotate + 5-phospho-alpha-D-ribose 1-diphosphate. It participates in pyrimidine metabolism; UMP biosynthesis via de novo pathway; UMP from orotate: step 1/2. Its function is as follows. Catalyzes the transfer of a ribosyl phosphate group from 5-phosphoribose 1-diphosphate to orotate, leading to the formation of orotidine monophosphate (OMP). The chain is Orotate phosphoribosyltransferase from Chlamydia pneumoniae (Chlamydophila pneumoniae).